Here is a 383-residue protein sequence, read N- to C-terminus: Chorismate synthase (383 aa).

NADP(+) contacts are provided by Arg40 and Arg46. FMN contacts are provided by residues 128-130 (RAS), Gly291, 306-310 (KPIPT), and Arg332.

Belongs to the chorismate synthase family. As to quaternary structure, homotetramer. FMNH2 is required as a cofactor.

It catalyses the reaction 5-O-(1-carboxyvinyl)-3-phosphoshikimate = chorismate + phosphate. The protein operates within metabolic intermediate biosynthesis; chorismate biosynthesis; chorismate from D-erythrose 4-phosphate and phosphoenolpyruvate: step 7/7. Functionally, catalyzes the anti-1,4-elimination of the C-3 phosphate and the C-6 proR hydrogen from 5-enolpyruvylshikimate-3-phosphate (EPSP) to yield chorismate, which is the branch point compound that serves as the starting substrate for the three terminal pathways of aromatic amino acid biosynthesis. This reaction introduces a second double bond into the aromatic ring system. The sequence is that of Chorismate synthase from Moorella thermoacetica (strain ATCC 39073 / JCM 9320).